The primary structure comprises 799 residues: Elongation factor G, mitochondrial (799 aa).

Residues 1 to 34 (MRCPSLTRLPYRAVSGLPRSVVRLQSQNFLTRRC) constitute a mitochondrion transit peptide. One can recognise a tr-type G domain in the interval 97–384 (SRVRNIGIAA…GVVDYLPNPA (288 aa)). Residues 106–113 (AHIDSGKT), 182–186 (DTPGH), and 236–239 (NKMD) contribute to the GTP site.

This sequence belongs to the TRAFAC class translation factor GTPase superfamily. Classic translation factor GTPase family. EF-G/EF-2 subfamily.

Its subcellular location is the mitochondrion. It participates in protein biosynthesis; polypeptide chain elongation. Its function is as follows. Mitochondrial GTPase that catalyzes the GTP-dependent ribosomal translocation step during translation elongation. During this step, the ribosome changes from the pre-translocational (PRE) to the post-translocational (POST) state as the newly formed A-site-bound peptidyl-tRNA and P-site-bound deacylated tRNA move to the P and E sites, respectively. Catalyzes the coordinated movement of the two tRNA molecules, the mRNA and conformational changes in the ribosome. The polypeptide is Elongation factor G, mitochondrial (mef1) (Aspergillus flavus (strain ATCC 200026 / FGSC A1120 / IAM 13836 / NRRL 3357 / JCM 12722 / SRRC 167)).